An 88-amino-acid polypeptide reads, in one-letter code: Transcription factor ILI5 (88 aa).

The bHLH domain maps to 1–54; that stretch reads MSSRRSSRGSISEEEINELISKLQSLLPNSRRRGSSQASTTKLLKETCNYIKSL.

The protein belongs to the bHLH protein family. Interacts with APG.

The protein resides in the nucleus. In terms of biological role, atypical and probable non DNA-binding bHLH transcription factor that acts as a positive regulator of grain size. Binds the transcription repressor APG and forms a heterodimer of antagonistic basic helix-loop-helix transcription factors that regulates grain length and weight by controlling cell elongation in lemma and palea. This Oryza sativa subsp. indica (Rice) protein is Transcription factor ILI5 (ILI5).